The following is an 840-amino-acid chain: E3 ubiquitin-protein ligase RNF19A (840 aa).

A disordered region spans residues 40–61 (SDRDLQSSTSSVSLPSVKKAPK). Over residues 45 to 56 (QSSTSSVSLPSV) the composition is skewed to low complexity. The TRIAD supradomain stretch occupies residues 128 to 351 (DFIECPLCLL…LSPSGCTFWG (224 aa)). Positions 132, 135, 150, 152, 155, 158, 176, 179, 219, 224, 241, 246, 251, 254, 259, 264, 301, and 304 each coordinate Zn(2+). The RING-type 1 zinc finger occupies 132–179 (CPLCLLRHSKDRFPDIMTCHHRSCVDCLRQYLRIEISESRVNISCPEC). The IBR-type zinc-finger motif lies at 199-264 (EKYEEFMLRR…KQIWHPNQTC (66 aa)). The RING-type 2; atypical zinc-finger motif lies at 301–332 (CPRCAAYIIKMNDGSCNHMTCAVCGCEFCWLC). Cys-316 is a catalytic residue. Positions 321, 324, 329, 332, 340, and 347 each coordinate Zn(2+). 2 helical membrane passes run 368-388 (LVGAPVGIALIAGIAIPAMII) and 424-444 (VIVSPVVAAVTVGIGVPIMLA). 3 disordered regions span residues 625–685 (FKFR…GNMK), 700–721 (QQSTNSSEFEAPSLSDSMPSVA), and 786–808 (CSDVPQPSHAADEHGTSRSGGKP). Residue Ser-631 is modified to Phosphoserine. The segment at 660–840 (ATKWSKEATG…DLKVAVQTEI (181 aa)) is interaction with CASR. Positions 671 to 683 (KKSKSGKLRKKGN) are enriched in basic residues. The span at 700-717 (QQSTNSSEFEAPSLSDSM) shows a compositional bias: polar residues.

Belongs to the RBR family. RNF19 subfamily. In terms of assembly, interacts with UBE2L3 and UBE2L6. Also interacts with transcription factor Sp1. Interacts with SNCAIP and CASR. Interacts with VCP.

Its subcellular location is the membrane. The protein localises to the cytoplasm. The protein resides in the cytoskeleton. It localises to the microtubule organizing center. It is found in the centrosome. It carries out the reaction [E2 ubiquitin-conjugating enzyme]-S-ubiquitinyl-L-cysteine + [acceptor protein]-L-lysine = [E2 ubiquitin-conjugating enzyme]-L-cysteine + [acceptor protein]-N(6)-ubiquitinyl-L-lysine.. The protein operates within protein modification; protein ubiquitination. Its function is as follows. E3 ubiquitin-protein ligase which accepts ubiquitin from E2 ubiquitin-conjugating enzymes UBE2L3 and UBE2L6 in the form of a thioester and then directly transfers the ubiquitin to targeted substrates, such as SNCAIP or CASR. The chain is E3 ubiquitin-protein ligase RNF19A (Rnf19a) from Mus musculus (Mouse).